A 66-amino-acid polypeptide reads, in one-letter code: uncharacterized protein (66 aa).

Residues 11–31 (PFPLLGVWIIVIIIVAVIGLL) traverse the membrane as a helical segment.

The protein localises to the membrane. This is an uncharacterized protein from Chenopodium amaranticolor (Quinoa).